The following is a 140-amino-acid chain: 3-hydroxyacyl-[acyl-carrier-protein] dehydratase FabZ (140 aa).

Residue H48 is part of the active site.

This sequence belongs to the thioester dehydratase family. FabZ subfamily.

It is found in the cytoplasm. It catalyses the reaction a (3R)-hydroxyacyl-[ACP] = a (2E)-enoyl-[ACP] + H2O. Its function is as follows. Involved in unsaturated fatty acids biosynthesis. Catalyzes the dehydration of short chain beta-hydroxyacyl-ACPs and long chain saturated and unsaturated beta-hydroxyacyl-ACPs. The polypeptide is 3-hydroxyacyl-[acyl-carrier-protein] dehydratase FabZ (Pelotomaculum thermopropionicum (strain DSM 13744 / JCM 10971 / SI)).